The following is a 367-amino-acid chain: 2-aminoethylphosphonate--pyruvate transaminase (367 aa).

K194 carries the post-translational modification N6-(pyridoxal phosphate)lysine.

Belongs to the class-V pyridoxal-phosphate-dependent aminotransferase family. PhnW subfamily. In terms of assembly, homodimer. Requires pyridoxal 5'-phosphate as cofactor.

The enzyme catalyses (2-aminoethyl)phosphonate + pyruvate = phosphonoacetaldehyde + L-alanine. Functionally, involved in phosphonate degradation. This is 2-aminoethylphosphonate--pyruvate transaminase from Salmonella agona (strain SL483).